Reading from the N-terminus, the 356-residue chain is Glutamine synthetase (356 aa).

Residues 19-99 (IIAEYIWIGG…VMCDCYTPRG (81 aa)) enclose the GS beta-grasp domain. The GS catalytic domain occupies 106 to 356 (KRYNAAKILS…IAQTTILWKP (251 aa)).

It belongs to the glutamine synthetase family. As to quaternary structure, homooctamer.

The protein resides in the cytoplasm. The enzyme catalyses L-glutamate + NH4(+) + ATP = L-glutamine + ADP + phosphate + H(+). The chain is Glutamine synthetase from Hordeum vulgare (Barley).